The following is a 157-amino-acid chain: MIILGIDPALGSLGWAVVAKETAQLKYLASGIIKTNSKDAIHHRLAFINSTLEKVILEYQPNMAAIEETFVNTNSVTSLKLGYARGAIMSLIGRYNLDMREFKPNTVKKTVTGYGHAEKDQILHMIKLLLPGTFLITNSDEADAVAIAYTCLVTKNY.

Catalysis depends on residues Asp7, Glu67, and Asp140. Asp7, Glu67, and Asp140 together coordinate Mg(2+).

It belongs to the RuvC family. In terms of assembly, homodimer which binds Holliday junction (HJ) DNA. The HJ becomes 2-fold symmetrical on binding to RuvC with unstacked arms; it has a different conformation from HJ DNA in complex with RuvA. In the full resolvosome a probable DNA-RuvA(4)-RuvB(12)-RuvC(2) complex forms which resolves the HJ. The cofactor is Mg(2+).

It localises to the cytoplasm. It catalyses the reaction Endonucleolytic cleavage at a junction such as a reciprocal single-stranded crossover between two homologous DNA duplexes (Holliday junction).. Functionally, the RuvA-RuvB-RuvC complex processes Holliday junction (HJ) DNA during genetic recombination and DNA repair. Endonuclease that resolves HJ intermediates. Cleaves cruciform DNA by making single-stranded nicks across the HJ at symmetrical positions within the homologous arms, yielding a 5'-phosphate and a 3'-hydroxyl group; requires a central core of homology in the junction. The consensus cleavage sequence is 5'-(A/T)TT(C/G)-3'. Cleavage occurs on the 3'-side of the TT dinucleotide at the point of strand exchange. HJ branch migration catalyzed by RuvA-RuvB allows RuvC to scan DNA until it finds its consensus sequence, where it cleaves and resolves the cruciform DNA. This is Crossover junction endodeoxyribonuclease RuvC from Rickettsia massiliae (strain Mtu5).